A 186-amino-acid chain; its full sequence is NADH-dependent FMN reductase SfnE (186 aa).

This sequence belongs to the SsuE family.

The catalysed reaction is FMNH2 + NAD(+) = FMN + NADH + 2 H(+). Functionally, involved in the dimethyl sulfide degradation pathway. Catalyzes the NADH-dependent reduction of FMN. The protein is NADH-dependent FMN reductase SfnE of Pseudomonas putida (Arthrobacter siderocapsulatus).